A 295-amino-acid polypeptide reads, in one-letter code: MESGDLRVFQMVAREGTITKAALQLGYVQSNVTARIQQLEAELGTTLFLRHNRGMTLSASGKLLLDYANKIIGLLDEASKALSSSAEPSGPLMIGCTQTTAAVRLPKLLASYYEEHPNVQLSLTTGHTQFLLDKVLRYELDGAFIGCECHHPELESYPAFEEEPVVVSAASVPDVEEAITKPILVYSTGCSYRETLEKWLRSVGVTQPVIMEFGTLEAIIGGVTAGLGISLLPRTVVQKHEAEGSIRLYPLPEALSQMKTEFIVRKDSFISSALRTFMDSFTPVKTAESQKSSLL.

Residues 1 to 58 (MESGDLRVFQMVAREGTITKAALQLGYVQSNVTARIQQLEAELGTTLFLRHNRGMTLS) enclose the HTH lysR-type domain. The segment at residues 18-37 (ITKAALQLGYVQSNVTARIQ) is a DNA-binding region (H-T-H motif).

Belongs to the LysR transcriptional regulatory family.

This is an uncharacterized protein from Bacillus subtilis (strain 168).